The chain runs to 364 residues: Aminomethyltransferase (364 aa).

Belongs to the GcvT family. The glycine cleavage system is composed of four proteins: P, T, L and H.

The enzyme catalyses N(6)-[(R)-S(8)-aminomethyldihydrolipoyl]-L-lysyl-[protein] + (6S)-5,6,7,8-tetrahydrofolate = N(6)-[(R)-dihydrolipoyl]-L-lysyl-[protein] + (6R)-5,10-methylene-5,6,7,8-tetrahydrofolate + NH4(+). In terms of biological role, the glycine cleavage system catalyzes the degradation of glycine. The chain is Aminomethyltransferase from Thermotoga petrophila (strain ATCC BAA-488 / DSM 13995 / JCM 10881 / RKU-1).